The chain runs to 327 residues: Cell surface glycoprotein CD200 receptor 1 (327 aa).

A signal peptide spans 1-23; it reads MLCFWRTSHVAVLLIWGVFAAES. Topologically, residues 24 to 239 are extracellular; that stretch reads SCPDKNQTMQ…GRGGDQLLGS (216 aa). Residues 26–145 form the Ig-like V-type domain; that stretch reads PDKNQTMQNN…GNFQNIYDLQ (120 aa). Asn-29, Asn-34, Asn-43, Asn-96, Asn-159, Asn-187, Asn-192, and Asn-222 each carry an N-linked (GlcNAc...) asparagine glycan. 2 disulfide bridges follow: Cys-58–Cys-129 and Cys-81–Cys-97. Residues 147 to 226 form the Ig-like C2-type domain; sequence LVPPEVTHFP…HLTTGNQSLS (80 aa). 2 disulfide bridges follow: Cys-164–Cys-213 and Cys-183–Cys-201. Residues 240–260 traverse the membrane as a helical segment; it reads YIQYIIPSIIILIIIGCICLL. Residues 261 to 327 are Cytoplasmic-facing; sequence KISGCRKCKL…DCLTLSAMGI (67 aa).

Belongs to the CD200R family. CD200 and CD200R1 interact via their respective N-terminal Ig-like domains. Phosphorylated on tyrosine residues. In terms of processing, highly N-glycosylated. As to expression, restricted to cells of the myeloid lineage.

It is found in the cell membrane. In terms of biological role, inhibitory receptor for the CD200/OX2 cell surface glycoprotein. Limits inflammation by inhibiting the expression of pro-inflammatory molecules including TNF-alpha, interferons, and inducible nitric oxide synthase (iNOS) in response to selected stimuli. The polypeptide is Cell surface glycoprotein CD200 receptor 1 (Cd200r1) (Rattus norvegicus (Rat)).